Consider the following 468-residue polypeptide: ERO1-like protein alpha (468 aa).

The first 23 residues, 1–23 (MGRGWGFLFGLLGAVWLLSSGHG), serve as a signal peptide directing secretion. Intrachain disulfides connect Cys-35–Cys-48, Cys-37–Cys-46, Cys-85–Cys-391, Cys-94–Cys-99, Cys-94–Cys-131, Cys-99–Cys-104, Cys-208–Cys-241, and Cys-394–Cys-397. A phosphoserine mark is found at Ser-106 and Ser-143. Ser-145 is modified (phosphoserine; by FAM20C). Positions 187, 189, and 200 each coordinate FAD. 2 residues coordinate FAD: Ser-252 and His-255. Asn-280 carries N-linked (GlcNAc...) asparagine glycosylation. Residues Arg-287 and Arg-300 each contribute to the FAD site. Residue Asn-384 is glycosylated (N-linked (GlcNAc...) asparagine).

Belongs to the EROs family. In terms of assembly, predominantly monomer. May function both as a monomer and a homodimer. Interacts with PDILT. Interacts with ERP44; the interaction results in retention of ERO1A in the endoplasmic reticulum. FAD serves as cofactor. In terms of processing, N-glycosylated. The Cys-94/Cys-99 and Cys-394/Cys-397 disulfide bonds constitute the redox-active center. The Cys-94/Cys-99 disulfide bond may accept electron from P4HB and funnel them to the active site disulfide Cys-394/Cys-397. The regulatory Cys-99/Cys-104 disulfide bond stabilizes the other regulatory bond Cys-94/Cys-131. Post-translationally, phosphorylated on Ser-145 by FAM20C in the Golgi which increases its enzymatic activity. Phosphorylation is induced by lactation. It is also induced by hypoxia and reductive stress. Widely expressed at low level. Expressed at high level in upper digestive tract. Highly expressed in esophagus. Weakly expressed in stomach and duodenum.

Its subcellular location is the endoplasmic reticulum membrane. It localises to the golgi apparatus lumen. The protein resides in the secreted. It is found in the cell projection. The protein localises to the dendrite. With respect to regulation, enzyme activity is tightly regulated to prevent the accumulation of reactive oxygen species in the endoplasmic reticulum. Reversibly down-regulated by the formation of disulfide bonds between the active site Cys-94 and Cys-131, and between Cys-99 and Cys-104. Glutathione may be required to regulate its activity in the endoplasmic reticulum. Functionally, oxidoreductase involved in disulfide bond formation in the endoplasmic reticulum. Efficiently reoxidizes P4HB/PDI, the enzyme catalyzing protein disulfide formation, in order to allow P4HB to sustain additional rounds of disulfide formation. Following P4HB reoxidation, passes its electrons to molecular oxygen via FAD, leading to the production of reactive oxygen species (ROS) in the cell. Required for the proper folding of immunoglobulins. Plays an important role in ER stress-induced, CHOP-dependent apoptosis by activating the inositol 1,4,5-trisphosphate receptor IP3R1. Involved in the release of the unfolded cholera toxin from reduced P4HB/PDI in case of infection by V.cholerae, thereby playing a role in retrotranslocation of the toxin. The polypeptide is ERO1-like protein alpha (Homo sapiens (Human)).